Here is a 496-residue protein sequence, read N- to C-terminus: Cobyric acid synthase (496 aa).

The GATase cobBQ-type domain occupies 256–444 (KINIAVVLLR…IHGILDNQAF (189 aa)). Residue Cys-337 is the Nucleophile of the active site. His-436 is an active-site residue.

The protein belongs to the CobB/CobQ family. CobQ subfamily.

It participates in cofactor biosynthesis; adenosylcobalamin biosynthesis. Its function is as follows. Catalyzes amidations at positions B, D, E, and G on adenosylcobyrinic A,C-diamide. NH(2) groups are provided by glutamine, and one molecule of ATP is hydrogenolyzed for each amidation. In Phocaeicola vulgatus (strain ATCC 8482 / DSM 1447 / JCM 5826 / CCUG 4940 / NBRC 14291 / NCTC 11154) (Bacteroides vulgatus), this protein is Cobyric acid synthase.